A 546-amino-acid chain; its full sequence is Chaperonin GroEL (546 aa).

ATP-binding positions include 30–33 (TLGP), Lys-51, 87–91 (DGTTT), Gly-415, 479–481 (NAA), and Asp-495. Residues 525 to 546 (PEPKKDMPPMPGGGMGGMGGMY) are disordered. The span at 536 to 546 (GGGMGGMGGMY) shows a compositional bias: gly residues.

The protein belongs to the chaperonin (HSP60) family. In terms of assembly, forms a cylinder of 14 subunits composed of two heptameric rings stacked back-to-back. Interacts with the co-chaperonin GroES.

The protein localises to the cytoplasm. It catalyses the reaction ATP + H2O + a folded polypeptide = ADP + phosphate + an unfolded polypeptide.. In terms of biological role, together with its co-chaperonin GroES, plays an essential role in assisting protein folding. The GroEL-GroES system forms a nano-cage that allows encapsulation of the non-native substrate proteins and provides a physical environment optimized to promote and accelerate protein folding. The sequence is that of Chaperonin GroEL from Solidesulfovibrio magneticus (strain ATCC 700980 / DSM 13731 / RS-1) (Desulfovibrio magneticus).